Consider the following 312-residue polypeptide: Porphobilinogen deaminase (312 aa).

S-(dipyrrolylmethanemethyl)cysteine is present on Cys243.

Belongs to the HMBS family. As to quaternary structure, monomer. Dipyrromethane serves as cofactor.

It carries out the reaction 4 porphobilinogen + H2O = hydroxymethylbilane + 4 NH4(+). Its pathway is porphyrin-containing compound metabolism; protoporphyrin-IX biosynthesis; coproporphyrinogen-III from 5-aminolevulinate: step 2/4. Functionally, tetrapolymerization of the monopyrrole PBG into the hydroxymethylbilane pre-uroporphyrinogen in several discrete steps. This is Porphobilinogen deaminase from Vibrio campbellii (strain ATCC BAA-1116).